Reading from the N-terminus, the 286-residue chain is Bifunctional protein FolD (286 aa).

NADP(+) is bound by residues 166 to 168 (GAS) and I232.

It belongs to the tetrahydrofolate dehydrogenase/cyclohydrolase family. Homodimer.

It catalyses the reaction (6R)-5,10-methylene-5,6,7,8-tetrahydrofolate + NADP(+) = (6R)-5,10-methenyltetrahydrofolate + NADPH. The enzyme catalyses (6R)-5,10-methenyltetrahydrofolate + H2O = (6R)-10-formyltetrahydrofolate + H(+). It functions in the pathway one-carbon metabolism; tetrahydrofolate interconversion. Functionally, catalyzes the oxidation of 5,10-methylenetetrahydrofolate to 5,10-methenyltetrahydrofolate and then the hydrolysis of 5,10-methenyltetrahydrofolate to 10-formyltetrahydrofolate. The protein is Bifunctional protein FolD of Vibrio cholerae serotype O1 (strain ATCC 39541 / Classical Ogawa 395 / O395).